A 314-amino-acid chain; its full sequence is DNA-directed RNA polymerase subunit alpha (314 aa).

Residues 1–227 (MTKFEIECVE…ELLHPLKEIN (227 aa)) form an alpha N-terminal domain (alpha-NTD) region. Residues 241–314 (KINQILIEEL…LPKEKTVKPN (74 aa)) form an alpha C-terminal domain (alpha-CTD) region.

It belongs to the RNA polymerase alpha chain family. In plastids the minimal PEP RNA polymerase catalytic core is composed of four subunits: alpha, beta, beta', and beta''. When a (nuclear-encoded) sigma factor is associated with the core the holoenzyme is formed, which can initiate transcription.

The protein localises to the plastid. Its subcellular location is the chloroplast. The catalysed reaction is RNA(n) + a ribonucleoside 5'-triphosphate = RNA(n+1) + diphosphate. DNA-dependent RNA polymerase catalyzes the transcription of DNA into RNA using the four ribonucleoside triphosphates as substrates. This chain is DNA-directed RNA polymerase subunit alpha, found in Rhodomonas salina (Cryptomonas salina).